We begin with the raw amino-acid sequence, 593 residues long: NADH-quinone oxidoreductase subunit C/D (593 aa).

The NADH dehydrogenase I subunit C stretch occupies residues 1–184 (MTADNAIFIP…DPYSLTLAKQ (184 aa)). Residues 208 to 593 (DYMFLNLGPN…IDFVMADVDR (386 aa)) form an NADH dehydrogenase I subunit D region.

The protein in the N-terminal section; belongs to the complex I 30 kDa subunit family. It in the C-terminal section; belongs to the complex I 49 kDa subunit family. As to quaternary structure, NDH-1 is composed of 13 different subunits. Subunits NuoB, CD, E, F, and G constitute the peripheral sector of the complex.

It localises to the cell inner membrane. It carries out the reaction a quinone + NADH + 5 H(+)(in) = a quinol + NAD(+) + 4 H(+)(out). NDH-1 shuttles electrons from NADH, via FMN and iron-sulfur (Fe-S) centers, to quinones in the respiratory chain. The immediate electron acceptor for the enzyme in this species is believed to be ubiquinone. Couples the redox reaction to proton translocation (for every two electrons transferred, four hydrogen ions are translocated across the cytoplasmic membrane), and thus conserves the redox energy in a proton gradient. The protein is NADH-quinone oxidoreductase subunit C/D of Pseudomonas putida (strain ATCC 47054 / DSM 6125 / CFBP 8728 / NCIMB 11950 / KT2440).